A 92-amino-acid chain; its full sequence is Large ribosomal subunit protein bL28 (92 aa).

This sequence belongs to the bacterial ribosomal protein bL28 family.

This is Large ribosomal subunit protein bL28 from Borrelia garinii subsp. bavariensis (strain ATCC BAA-2496 / DSM 23469 / PBi) (Borreliella bavariensis).